The primary structure comprises 122 residues: Small ribosomal subunit protein uS13 (122 aa).

Residues 95 to 122 (GLPVHGQRTHTNARTRKGPRRGAVGKKK) are disordered.

It belongs to the universal ribosomal protein uS13 family. In terms of assembly, part of the 30S ribosomal subunit. Forms a loose heterodimer with protein S19. Forms two bridges to the 50S subunit in the 70S ribosome.

Functionally, located at the top of the head of the 30S subunit, it contacts several helices of the 16S rRNA. In the 70S ribosome it contacts the 23S rRNA (bridge B1a) and protein L5 of the 50S subunit (bridge B1b), connecting the 2 subunits; these bridges are implicated in subunit movement. Contacts the tRNAs in the A and P-sites. The sequence is that of Small ribosomal subunit protein uS13 from Nitratidesulfovibrio vulgaris (strain DSM 19637 / Miyazaki F) (Desulfovibrio vulgaris).